Here is a 62-residue protein sequence, read N- to C-terminus: Photosystem II reaction center protein Z (62 aa).

2 helical membrane-spanning segments follow: residues 8-28 (AIFA…VVFA) and 41-61 (FSGT…NSLI).

The protein belongs to the PsbZ family. PSII is composed of 1 copy each of membrane proteins PsbA, PsbB, PsbC, PsbD, PsbE, PsbF, PsbH, PsbI, PsbJ, PsbK, PsbL, PsbM, PsbT, PsbY, PsbZ, Psb30/Ycf12, at least 3 peripheral proteins of the oxygen-evolving complex and a large number of cofactors. It forms dimeric complexes.

The protein localises to the plastid. The protein resides in the chloroplast thylakoid membrane. Its function is as follows. May control the interaction of photosystem II (PSII) cores with the light-harvesting antenna, regulates electron flow through the 2 photosystem reaction centers. PSII is a light-driven water plastoquinone oxidoreductase, using light energy to abstract electrons from H(2)O, generating a proton gradient subsequently used for ATP formation. The sequence is that of Photosystem II reaction center protein Z from Acorus gramineus (Dwarf sweet flag).